The primary structure comprises 842 residues: Elongation factor 2 (842 aa).

Residues Thr-17–Lys-253 form the tr-type G domain. GTP contacts are provided by residues Ala-26–Ser-33, Asn-158–Asp-161, and Ser-213–Leu-215. Position 699 is a diphthamide (His-699).

Belongs to the TRAFAC class translation factor GTPase superfamily. Classic translation factor GTPase family. EF-G/EF-2 subfamily.

The protein localises to the cytoplasm. It carries out the reaction GTP + H2O = GDP + phosphate + H(+). Catalyzes the GTP-dependent ribosomal translocation step during translation elongation. During this step, the ribosome changes from the pre-translocational (PRE) to the post-translocational (POST) state as the newly formed A-site-bound peptidyl-tRNA and P-site-bound deacylated tRNA move to the P and E sites, respectively. Catalyzes the coordinated movement of the two tRNA molecules, the mRNA and conformational changes in the ribosome. The sequence is that of Elongation factor 2 (EFT1) from Naumovozyma castellii (Yeast).